A 202-amino-acid polypeptide reads, in one-letter code: MADPRVEEIVEEETPKQTVEDAGSDSESEAGEANIPAGAAVTIHSRNEKKARKAIGKLGLKHVPGITRVTLRRPKNILFVINQPDVYRSPSSNTWIIFGEAKIEDLNSQAQASAAQQLAAAEAAAGEHAGHDHEHDLGTKVPEAETKKEEEEDDGEPVDESGLEAKDIELVMAQANVSRKKAVKALRENDNDIVNSIMALSI.

Residues 1–19 (MADPRVEEIVEEETPKQTV) show a composition bias toward basic and acidic residues. The segment at 1-41 (MADPRVEEIVEEETPKQTVEDAGSDSESEAGEANIPAGAAV) is disordered. The NAC-A/B domain maps to 45 to 110 (SRNEKKARKA…AKIEDLNSQA (66 aa)). Positions 117–127 (QLAAAEAAAGE) are enriched in low complexity. Residues 117–165 (QLAAAEAAAGEHAGHDHEHDLGTKVPEAETKKEEEEDDGEPVDESGLEA) form a disordered region. Residues 128-149 (HAGHDHEHDLGTKVPEAETKKE) show a composition bias toward basic and acidic residues. Acidic residues predominate over residues 150–162 (EEEDDGEPVDESG). Residues 163–202 (LEAKDIELVMAQANVSRKKAVKALRENDNDIVNSIMALSI) enclose the UBA domain.

This sequence belongs to the NAC-alpha family. In terms of assembly, part of the nascent polypeptide-associated complex (NAC), consisting of egd2 and egd1. NAC associates with ribosomes via egd1.

It localises to the cytoplasm. Its subcellular location is the nucleus. Component of the nascent polypeptide-associated complex (NAC), a dynamic component of the ribosomal exit tunnel, protecting the emerging polypeptides from interaction with other cytoplasmic proteins to ensure appropriate nascent protein targeting. The NAC complex also promotes mitochondrial protein import by enhancing productive ribosome interactions with the outer mitochondrial membrane and blocks the inappropriate interaction of ribosomes translating non-secretory nascent polypeptides with translocation sites in the membrane of the endoplasmic reticulum. Egd2 may also be involved in transcription regulation. The chain is Nascent polypeptide-associated complex subunit alpha (egd2) from Aspergillus oryzae (strain ATCC 42149 / RIB 40) (Yellow koji mold).